Here is a 390-residue protein sequence, read N- to C-terminus: Phosphopentomutase (390 aa).

Residues aspartate 10, aspartate 282, histidine 287, aspartate 323, histidine 324, and histidine 335 each coordinate Mn(2+).

This sequence belongs to the phosphopentomutase family. Requires Mn(2+) as cofactor.

Its subcellular location is the cytoplasm. The catalysed reaction is 2-deoxy-alpha-D-ribose 1-phosphate = 2-deoxy-D-ribose 5-phosphate. It catalyses the reaction alpha-D-ribose 1-phosphate = D-ribose 5-phosphate. Its pathway is carbohydrate degradation; 2-deoxy-D-ribose 1-phosphate degradation; D-glyceraldehyde 3-phosphate and acetaldehyde from 2-deoxy-alpha-D-ribose 1-phosphate: step 1/2. Functionally, isomerase that catalyzes the conversion of deoxy-ribose 1-phosphate (dRib-1-P) and ribose 1-phosphate (Rib-1-P) to deoxy-ribose 5-phosphate (dRib-5-P) and ribose 5-phosphate (Rib-5-P), respectively. This is Phosphopentomutase from Lachnoclostridium phytofermentans (strain ATCC 700394 / DSM 18823 / ISDg) (Clostridium phytofermentans).